Reading from the N-terminus, the 654-residue chain is Probable protein phosphatase 2C 23 (654 aa).

Residues 11 to 30 (CLTGGAGRNKKPELSILEPD) are disordered. Ser147 carries the phosphoserine modification. Residues 243 to 645 (DVSLESQNLQ…DDVSIVVISL (403 aa)) enclose the PPM-type phosphatase domain. Residues Asp280 and Gly281 each contribute to the Mn(2+) site. The disordered stretch occupies residues 309–336 (DDPKTDAKSSDEADVENRDSSSEKKSKN). Mn(2+) is bound by residues Asp573 and Asp636.

Belongs to the PP2C family. Mg(2+) serves as cofactor. Requires Mn(2+) as cofactor. Expressed in seedlings, roots, leaves, stems, young inflorescences, flowers and siliques.

The protein resides in the nucleus. The enzyme catalyses O-phospho-L-seryl-[protein] + H2O = L-seryl-[protein] + phosphate. It catalyses the reaction O-phospho-L-threonyl-[protein] + H2O = L-threonyl-[protein] + phosphate. Its function is as follows. Involved in leaf development regulation. This is Probable protein phosphatase 2C 23 (PLL4) from Arabidopsis thaliana (Mouse-ear cress).